The following is a 418-amino-acid chain: Phosphoglycerate kinase (418 aa).

Positions 23, 24, 25, 26, 39, 40, 63, 64, 66, 67, 122, 123, 170, and 171 each coordinate (2R)-3-phosphoglycerate. Gly214 is an ADP binding site. Gly214 lines the CDP pocket. The AMP site is built by Ala215 and Lys216. Ala215 contacts ATP. Residue Ala215 coordinates Mg(2+). Position 219 (Asp219) interacts with CDP. Asp219 contacts Mg(2+). Position 220 (Lys220) interacts with AMP. ATP is bound at residue Lys220. An ADP-binding site is contributed by Gly238. Residue Gly238 coordinates CDP. 2 residues coordinate AMP: Gly239 and Gly313. ATP-binding residues include Gly239 and Gly313. Gly338, Ala340, and Phe343 together coordinate CDP. Position 343 (Phe343) interacts with ADP. Glu344 serves as a coordination point for AMP. Glu344, Asp375, and Thr376 together coordinate ATP. Asp375 is a binding site for Mg(2+).

It belongs to the phosphoglycerate kinase family. As to quaternary structure, monomer. The cofactor is Mg(2+).

Its subcellular location is the cytoplasm. It is found in the mitochondrion. It carries out the reaction (2R)-3-phosphoglycerate + ATP = (2R)-3-phospho-glyceroyl phosphate + ADP. The protein operates within carbohydrate degradation; glycolysis; pyruvate from D-glyceraldehyde 3-phosphate: step 2/5. Its function is as follows. Catalyzes one of the two ATP producing reactions in the glycolytic pathway via the reversible conversion of 1,3-diphosphoglycerate to 3-phosphoglycerate. Both L- and D- forms of purine and pyrimidine nucleotides can be used as substrates, but the activity is much lower on pyrimidines. Negatively regulates the biosynthesis of acetyl-CoA from pyruvate in the mitochondrion. This chain is Phosphoglycerate kinase (pgk-1), found in Neurospora crassa (strain ATCC 24698 / 74-OR23-1A / CBS 708.71 / DSM 1257 / FGSC 987).